We begin with the raw amino-acid sequence, 310 residues long: Probable RuBisCO transcriptional regulator (310 aa).

The region spanning 6-63 is the HTH lysR-type domain; that stretch reads FTLDQLRILKAIASEGSFKKAAESLYISQPAVSLQIQNLEKQLNIPIFDRANRKAVFT. Positions 23 to 42 form a DNA-binding region, H-T-H motif; the sequence is FKKAAESLYISQPAVSLQIQ.

Belongs to the LysR transcriptional regulatory family.

It is found in the plastid. Its subcellular location is the chloroplast. Its function is as follows. Trans-acting transcriptional regulator of RuBisCO genes (rbcL and rbcS) expression. This chain is Probable RuBisCO transcriptional regulator (rbcR), found in Guillardia theta (Cryptophyte).